The sequence spans 341 residues: tRNA N6-adenosine threonylcarbamoyltransferase (341 aa).

Fe cation contacts are provided by His111 and His115. Substrate-binding positions include 134–138 (LVSGG), Asp167, Gly180, and Asn276. Asp304 lines the Fe cation pocket.

This sequence belongs to the KAE1 / TsaD family. Requires Fe(2+) as cofactor.

Its subcellular location is the cytoplasm. The enzyme catalyses L-threonylcarbamoyladenylate + adenosine(37) in tRNA = N(6)-L-threonylcarbamoyladenosine(37) in tRNA + AMP + H(+). Its function is as follows. Required for the formation of a threonylcarbamoyl group on adenosine at position 37 (t(6)A37) in tRNAs that read codons beginning with adenine. Is involved in the transfer of the threonylcarbamoyl moiety of threonylcarbamoyl-AMP (TC-AMP) to the N6 group of A37, together with TsaE and TsaB. TsaD likely plays a direct catalytic role in this reaction. This Pseudomonas aeruginosa (strain UCBPP-PA14) protein is tRNA N6-adenosine threonylcarbamoyltransferase.